A 325-amino-acid polypeptide reads, in one-letter code: MVITKGVTALLVSFFVALGGGRVLIPWLLKLKIGQTVRTEGPKRHLKKSGTPTMGGIIFLLSLVVTVVVFQAFDAKTLLLLITTLLFGLLGFLDDYLKVVLRRPLGLRAREKLLGQVIFSLVLTFGAVAFLGRGTDWYIPFSRLLLGEPRYLELGNVFFFAATIFIMVGFANAVNLTDGVDGLCSSVTLIVMSFFAMTSLALKEKGLFIFALALMGGLVGFLVYNRHPAKVFMGDTGSLALGAAVAGFAVLTQTELFLLLVGLIYVVETLSVIIQVIVYQLTGKRVFKMSPLHHHFELSGWSENKIVLVFSLVTLIMVLISGYGL.

10 consecutive transmembrane segments (helical) span residues 9-29 (ALLVSFFVALGGGRVLIPWLL), 53-73 (TMGGIIFLLSLVVTVVVFQAF), 77-97 (TLLLLITTLLFGLLGFLDDYL), 112-132 (KLLGQVIFSLVLTFGAVAFLG), 154-174 (LGNVFFFAATIFIMVGFANAV), 182-202 (GLCSSVTLIVMSFFAMTSLAL), 204-224 (EKGLFIFALALMGGLVGFLVY), 231-251 (VFMGDTGSLALGAAVAGFAVL), 257-277 (FLLLVGLIYVVETLSVIIQVI), and 305-325 (KIVLVFSLVTLIMVLISGYGL).

The protein belongs to the glycosyltransferase 4 family. MraY subfamily. Mg(2+) serves as cofactor.

Its subcellular location is the cell membrane. The catalysed reaction is UDP-N-acetyl-alpha-D-muramoyl-L-alanyl-gamma-D-glutamyl-meso-2,6-diaminopimeloyl-D-alanyl-D-alanine + di-trans,octa-cis-undecaprenyl phosphate = di-trans,octa-cis-undecaprenyl diphospho-N-acetyl-alpha-D-muramoyl-L-alanyl-D-glutamyl-meso-2,6-diaminopimeloyl-D-alanyl-D-alanine + UMP. It functions in the pathway cell wall biogenesis; peptidoglycan biosynthesis. Catalyzes the initial step of the lipid cycle reactions in the biosynthesis of the cell wall peptidoglycan: transfers peptidoglycan precursor phospho-MurNAc-pentapeptide from UDP-MurNAc-pentapeptide onto the lipid carrier undecaprenyl phosphate, yielding undecaprenyl-pyrophosphoryl-MurNAc-pentapeptide, known as lipid I. The sequence is that of Phospho-N-acetylmuramoyl-pentapeptide-transferase from Carboxydothermus hydrogenoformans (strain ATCC BAA-161 / DSM 6008 / Z-2901).